Here is a 1323-residue protein sequence, read N- to C-terminus: DNA-directed RNA polymerase subunit beta' (1323 aa).

4 residues coordinate Zn(2+): C60, C62, C75, and C78. Residues D535, D537, and D539 each contribute to the Mg(2+) site. Zn(2+) is bound by residues C894, C977, C984, and C987.

Belongs to the RNA polymerase beta' chain family. In terms of assembly, the RNAP catalytic core consists of 2 alpha, 1 beta, 1 beta' and 1 omega subunit. When a sigma factor is associated with the core the holoenzyme is formed, which can initiate transcription. It depends on Mg(2+) as a cofactor. The cofactor is Zn(2+).

It carries out the reaction RNA(n) + a ribonucleoside 5'-triphosphate = RNA(n+1) + diphosphate. Functionally, DNA-dependent RNA polymerase catalyzes the transcription of DNA into RNA using the four ribonucleoside triphosphates as substrates. This is DNA-directed RNA polymerase subunit beta' from Corynebacterium jeikeium (strain K411).